The chain runs to 173 residues: Alpha-crystallin A chain (173 aa).

The residue at position 1 (M1) is an N-acetylmethionine. The required for complex formation with BFSP1 and BFSP2 stretch occupies residues 1 to 63; it reads MDIAIQHPWF…RTVLDSGVSE (63 aa). Q6 is subject to Deamidated glutamine; partial. A Phosphoserine modification is found at S45. Deamidated glutamine; partial is present on Q50. Residues 52–162 form the sHSP domain; the sequence is LFRTVLDSGV…GHSERAIPVS (111 aa). K70 bears the N6-acetyllysine mark. H79 is a binding site for Zn(2+). Q90 bears the Deamidated glutamine; partial mark. At K99 the chain carries N6-acetyllysine. Residue H100 participates in Zn(2+) binding. N101 bears the Deamidated asparagine; partial mark. Zn(2+)-binding residues include E102 and H107. S122 is modified (phosphoserine). N123 carries the post-translational modification Deamidated asparagine; partial. Positions 144–173 are disordered; that stretch reads PKVPSGVDAGHSERAIPVSREEKPSSAPTS. Positions 153–167 are enriched in basic and acidic residues; the sequence is GHSERAIPVSREEKP. Residue H154 coordinates Zn(2+). S162 is a glycosylation site (O-linked (GlcNAc) serine).

This sequence belongs to the small heat shock protein (HSP20) family. Heteromer composed of three CRYAA and one CRYAB subunits. Inter-subunit bridging via zinc ions enhances stability, which is crucial as there is no protein turn over in the lens. Can also form homodimers and homotetramers (dimers of dimers) which serve as the building blocks of homooligomers. Within homooligomers, the zinc-binding motif is created from residues of 3 different molecules. His-100 and Glu-102 from one molecule are ligands of the zinc ion, and His-107 and His-154 residues from additional molecules complete the site with tetrahedral coordination geometry. Part of a complex required for lens intermediate filament formation composed of BFSP1, BFSP2 and CRYAA. Acetylation at Lys-70 may increase chaperone activity. Post-translationally, undergoes age-dependent proteolytical cleavage at the C-terminus.

The protein localises to the cytoplasm. The protein resides in the nucleus. Contributes to the transparency and refractive index of the lens. Acts as a chaperone, preventing aggregation of various proteins under a wide range of stress conditions. Required for the correct formation of lens intermediate filaments as part of a complex composed of BFSP1, BFSP2 and CRYAA. This Sus scrofa (Pig) protein is Alpha-crystallin A chain (CRYAA).